We begin with the raw amino-acid sequence, 633 residues long: Protein BZZ1 (633 aa).

The F-BAR domain occupies 5-271 (LSIGNEIKDS…VVKQNKPSLN (267 aa)). Residues 138-210 (DMVNKKDNIY…INQANRTKDK (73 aa)) are a coiled coil. Phosphoserine occurs at positions 327, 463, 472, and 476. The interval 429–495 (VDSKPSSGGS…KKTTQNSSDD (67 aa)) is disordered. A compositionally biased stretch (low complexity) spans 474–493 (NNSIRTTSTNNTKKTTQNSS). 2 consecutive SH3 domains span residues 493–555 (SDDG…ISSA) and 577–633 (LPVR…SYCK).

It belongs to the BZZ1 family. Interacts with LAS17 and MYO5.

It localises to the cytoplasm. It is found in the cytoskeleton. The protein resides in the actin patch. In terms of biological role, plays a role in endocytosis and trafficking to the vacuole. Functions with type I myosins to restore polarity of the actin cytoskeleton after NaCl stress. This is Protein BZZ1 (BZZ1) from Saccharomyces cerevisiae (strain ATCC 204508 / S288c) (Baker's yeast).